The primary structure comprises 475 residues: Deoxyguanosinetriphosphate triphosphohydrolase-like protein (475 aa).

An HD domain is found at 118 to 272; sequence RLTHTLEVAQ…MDLSDDIAYS (155 aa).

The protein belongs to the dGTPase family. Type 2 subfamily.

In Bifidobacterium longum (strain NCC 2705), this protein is Deoxyguanosinetriphosphate triphosphohydrolase-like protein (dgt).